The sequence spans 693 residues: Follicle-stimulating hormone receptor (693 aa).

Residues 1 to 18 (MFLVFTCSLILLASCSSC) form the signal peptide. Cystine bridges form between Cys18–Cys25 and Cys23–Cys32. The 28-residue stretch at 19–46 (QHHTCHCAGRIFICQESKVVQLPRDIPT) folds into the LRRNT domain. Residues 19-366 (QHHTCHCAGR…EDIMGYTILR (348 aa)) lie on the Extracellular side of the membrane. An N-linked (GlcNAc...) asparagine glycan is attached at Asn47. LRR repeat units lie at residues 49–72 (TELR…LLDL), 73–97 (EKIE…LPKL), 98–118 (HEIR…AFQH), 119–143 (LPSL…KVHS), 144–169 (FQKV…MGLS), 170–192 (SESV…AFNG), 193–216 (TYLD…VFQG), 217–240 (ANGP…GLEL), and 241–259 (IKKL…PDLS). N-linked (GlcNAc...) asparagine glycans are attached at residues Asn191 and Asn199. Asn268 carries an N-linked (GlcNAc...) asparagine glycan. Disulfide bonds link Cys275–Cys346, Cys276–Cys292, Cys276–Cys356, and Cys292–Cys338. A helical membrane pass occupies residues 367–387 (VLIWFISILAITGNIVVLIIL). The Cytoplasmic segment spans residues 388–398 (ISSQYKLTVPR). A helical transmembrane segment spans residues 399-421 (FLMCNLAFADLCIGIYLLFIASV). The Extracellular segment spans residues 422–443 (DIQTKSQYYNYAIDWQTGAGCN). Cys442 and Cys517 are disulfide-bonded. The helical transmembrane segment at 444–465 (AAGFFTVFASELSVYTLTVITL) threads the bilayer. Over 466 to 485 (ERWHTITYAMQLDRKVRFRH) the chain is Cytoplasmic. A helical transmembrane segment spans residues 486-508 (AVIIMIFGWMFAFTVALLPIFGV). Residues 509-528 (SSYMKVSICLPMDIETPFSQ) lie on the Extracellular side of the membrane. The chain crosses the membrane as a helical span at residues 529–550 (AYVIFLLVLNVLAFVIICACYI). Over 551–573 (CIYFTVRNPNVISSNSDTKIAKR) the chain is Cytoplasmic. Residues 574–597 (MAILIFTDFLCMAPISFFAISASL) traverse the membrane as a helical segment. At 598 to 608 (KVPLITVSKSK) the chain is on the extracellular side. A helical transmembrane segment spans residues 609-630 (ILLVLFYPINSCANPFLYAIFT). Topologically, residues 631–693 (KTFRRDFFIL…YSLVPLNHLN (63 aa)) are cytoplasmic.

The protein belongs to the G-protein coupled receptor 1 family. FSH/LSH/TSH subfamily. Homotrimer. Functions as a homotrimer binding the FSH hormone heterodimer composed of CGA and FSHB.

It localises to the cell membrane. In terms of biological role, g protein-coupled receptor for follitropin, the follicle-stimulating hormone. Through cAMP production activates the downstream PI3K-AKT and ERK1/ERK2 signaling pathways. This is Follicle-stimulating hormone receptor (FSHR) from Cairina moschata (Muscovy duck).